Here is a 90-residue protein sequence, read N- to C-terminus: Potassium channel toxin BmTXK-beta (90 aa).

Positions 1–22 (MMKQQFFLFLAVIVMISSVIEA) are cleaved as a signal peptide. The propeptide occupies 23–29 (GRGKEIM). One can recognise a BetaSPN-type CS-alpha/beta domain in the interval 55–90 (EYACPVIEKWCEDHCAAKKAIGKCEDTECKCLKLRK). 3 cysteine pairs are disulfide-bonded: Cys58/Cys78, Cys65/Cys83, and Cys69/Cys85.

The protein belongs to the long chain scorpion toxin family. Class 2 subfamily. In terms of tissue distribution, expressed by the venom gland.

It is found in the secreted. Its function is as follows. This recombinant peptide reversibly and dose-dependently inhibits the transient outward potassium current (I(To)) of rabbit atrial myocyte and prolongs the action potential duration of rabbit atrial myocyte without affecting the action potential amplitude. Thus, the voltage-gated potassium channels Kv4.1/KCND1, Kv4.2/KCND2, Kv4.3/KCND3 may be the target of this toxin. This Olivierus martensii (Manchurian scorpion) protein is Potassium channel toxin BmTXK-beta.